Reading from the N-terminus, the 911-residue chain is Inter-alpha-trypsin inhibitor heavy chain H1 (911 aa).

The first 27 residues, 1-27 (MDGAMGPRGLLLCMYLVSLLILQAMPA), serve as a signal peptide directing secretion. Residues 28–34 (LGSATGR) constitute a propeptide that is removed on maturation. The VIT domain maps to 37–166 (SSEKRQAVDT…KVTFQLTYEE (130 aa)). Cys60 is a glycosylation site (S-linked (Hex...) cysteine). Residue Ser129 is modified to Phosphoserine. The Phagocytosis uptake signal signature appears at 181-184 (VKPK). 2 disulfides stabilise this stretch: Cys244–Cys247 and Cys268–Cys540. An N-linked (GlcNAc...) (complex) asparagine glycan is attached at Asn285. One can recognise a VWFA domain in the interval 290 to 450 (NKNVVFVIDI…FNFLEVMSME (161 aa)). The tract at residues 387–911 (SLPELSNHAS…YTDYIVPDIF (525 aa)) is hyaluronan-binding. Phosphothreonine occurs at positions 402 and 407. Asn588 carries N-linked (GlcNAc...) (complex) asparagine glycosylation. Thr653 carries an O-linked (GalNAc...) threonine glycan. An Aspartate 1-(chondroitin 4-sulfate)-ester modification is found at Asp672. Positions 673-911 (PHFIIHVPQK…YTDYIVPDIF (239 aa)) are excised as a propeptide. An N-linked (GlcNAc...) asparagine glycan is attached at Asn750.

It belongs to the ITIH family. I-alpha-I plasma protease inhibitors are assembled from one or two heavy chains (HC) and one light chain, bikunin. Inter-alpha-inhibitor (I-alpha-I) is composed of ITIH1/HC1, ITIH2/HC2 and bikunin. Interacts with TNFAIP6 (via Link and CUB domains). In terms of processing, heavy chains are linked to bikunin via chondroitin 4-sulfate esterified to the alpha-carboxyl of the C-terminal aspartate after propeptide cleavage. Post-translationally, the S-linked glycan is composed of two 6-carbon sugars, possibly Glc or Gal.

Its subcellular location is the secreted. Its function is as follows. May act as a carrier of hyaluronan in serum or as a binding protein between hyaluronan and other matrix protein, including those on cell surfaces in tissues to regulate the localization, synthesis and degradation of hyaluronan which are essential to cells undergoing biological processes. In terms of biological role, contains a potential peptide which could stimulate a broad spectrum of phagocytotic cells. The protein is Inter-alpha-trypsin inhibitor heavy chain H1 (ITIH1) of Homo sapiens (Human).